Consider the following 285-residue polypeptide: 4-diphosphocytidyl-2-C-methyl-D-erythritol kinase (285 aa).

Residue Lys10 is part of the active site. 92 to 102 (PFGAGLGGGSS) lines the ATP pocket. The active site involves Asp134.

This sequence belongs to the GHMP kinase family. IspE subfamily.

It catalyses the reaction 4-CDP-2-C-methyl-D-erythritol + ATP = 4-CDP-2-C-methyl-D-erythritol 2-phosphate + ADP + H(+). Its pathway is isoprenoid biosynthesis; isopentenyl diphosphate biosynthesis via DXP pathway; isopentenyl diphosphate from 1-deoxy-D-xylulose 5-phosphate: step 3/6. Its function is as follows. Catalyzes the phosphorylation of the position 2 hydroxy group of 4-diphosphocytidyl-2C-methyl-D-erythritol. This Chloroherpeton thalassium (strain ATCC 35110 / GB-78) protein is 4-diphosphocytidyl-2-C-methyl-D-erythritol kinase.